The primary structure comprises 441 residues: Arginine biosynthesis bifunctional protein ArgJ, mitochondrial (441 aa).

Substrate-binding residues include T178, K204, T215, E304, N436, and S441. The active-site Nucleophile is the T215.

The protein belongs to the ArgJ family. Heterodimer of an alpha and a beta chain. The alpha and beta chains are autoproteolytically processed from a single precursor protein within the mitochondrion.

The protein resides in the mitochondrion matrix. The enzyme catalyses N(2)-acetyl-L-ornithine + L-glutamate = N-acetyl-L-glutamate + L-ornithine. It catalyses the reaction L-glutamate + acetyl-CoA = N-acetyl-L-glutamate + CoA + H(+). Its pathway is amino-acid biosynthesis; L-arginine biosynthesis; L-ornithine and N-acetyl-L-glutamate from L-glutamate and N(2)-acetyl-L-ornithine (cyclic): step 1/1. It participates in amino-acid biosynthesis; L-arginine biosynthesis; N(2)-acetyl-L-ornithine from L-glutamate: step 1/4. Functionally, catalyzes two activities which are involved in the cyclic version of arginine biosynthesis: the synthesis of acetylglutamate from glutamate and acetyl-CoA, and of ornithine by transacetylation between acetylornithine and glutamate. The chain is Arginine biosynthesis bifunctional protein ArgJ, mitochondrial from Lodderomyces elongisporus (strain ATCC 11503 / CBS 2605 / JCM 1781 / NBRC 1676 / NRRL YB-4239) (Yeast).